The sequence spans 139 residues: Peptide methionine sulfoxide reductase B5 (139 aa).

An N-acetylalanine modification is found at alanine 2. The MsrB domain maps to 12–133 (EEEWRAVLSP…NSVSISFNPA (122 aa)). Cysteine 51, cysteine 54, cysteine 97, and cysteine 100 together coordinate Zn(2+). A disulfide bridge links cysteine 69 with cysteine 122. Residue cysteine 122 is the Nucleophile of the active site.

Belongs to the MsrB Met sulfoxide reductase family. Requires Zn(2+) as cofactor.

The protein localises to the cytoplasm. The protein resides in the cytosol. The enzyme catalyses L-methionyl-[protein] + [thioredoxin]-disulfide + H2O = L-methionyl-(R)-S-oxide-[protein] + [thioredoxin]-dithiol. Its function is as follows. Catalyzes the reduction of methionine sulfoxide (MetSO) to methionine in proteins. Plays a protective role against oxidative stress by restoring activity to proteins that have been inactivated by methionine oxidation. MSRB family specifically reduces the MetSO R-enantiomer. The protein is Peptide methionine sulfoxide reductase B5 (MSRB5) of Arabidopsis thaliana (Mouse-ear cress).